A 765-amino-acid chain; its full sequence is BRCA1-associated RING domain protein 1 (765 aa).

The required for BRCA1 binding stretch occupies residues 20-113 (MEPATDGLWA…KLQNLLHDNK (94 aa)). The RING-type zinc-finger motif lies at 44-81 (CSRCANILKEPVCLGGCEHIFCSGCISDCVGSGCPVCY). Lysine 152 is covalently cross-linked (Glycyl lysine isopeptide (Lys-Gly) (interchain with G-Cter in SUMO2)). Disordered stretches follow at residues 183–229 (AVPK…EELK), 299–328 (KDLR…GSNI), and 369–410 (NASD…MPAR). Over residues 195-204 (SAKKHPKKSV) the composition is skewed to basic residues. Basic and acidic residues predominate over residues 207-229 (INREENLRPETKDSRFDSKEELK). The span at 316–328 (PTTSTSDSCGSNI) shows a compositional bias: polar residues. A Phosphoserine modification is found at serine 378. Residue threonine 381 is modified to Phosphothreonine. Positions 391 to 403 (HRQMMSSPSTVKL) are enriched in polar residues. Lysine 411 is covalently cross-linked (Glycyl lysine isopeptide (Lys-Gly) (interchain with G-Cter in SUMO2)). ANK repeat units lie at residues 415-447 (RGET…VKDH), 448-480 (AGWT…TPGY), and 481-513 (QNDS…AVNI). An ANK 4; degenerate repeat occupies 514 to 534 (FGVRPVDYTDNENIRSLLLLP). A flexible linker region spans residues 542-546 (TSQCS). 2 consecutive BRCT domains span residues 549–641 (NTGQ…KYEV) and 655–765 (LLPK…PLDS).

In terms of assembly, homo- and heterodimer. Heterodimer (RING-type zinc finger) with BRCA1. Heterodimer (via ANK repeats and BRCT domains) with CSTF1/CSTF-50. Component of the BRCA1-A complex, at least composed of the BRCA1, BARD1, UIMC1/RAP80, ABRAXAS1, BRCC3/BRCC36, BABAM2 and BABAM1/NBA1. Interacts with UBXN1. Processed during apoptosis. The homodimer is more susceptible to proteolytic cleavage than the BARD1/BRCA1 heterodimer.

The protein localises to the nucleus. The protein resides in the cytoplasm. It carries out the reaction S-ubiquitinyl-[E2 ubiquitin-conjugating enzyme]-L-cysteine + [acceptor protein]-L-lysine = [E2 ubiquitin-conjugating enzyme]-L-cysteine + N(6)-ubiquitinyl-[acceptor protein]-L-lysine.. The protein operates within protein modification; protein ubiquitination. Functionally, E3 ubiquitin-protein ligase. The BRCA1-BARD1 heterodimer specifically mediates the formation of 'Lys-6'-linked polyubiquitin chains and coordinates a diverse range of cellular pathways such as DNA damage repair, ubiquitination and transcriptional regulation to maintain genomic stability. Plays a central role in the control of the cell cycle in response to DNA damage. Acts by mediating ubiquitin E3 ligase activity that is required for its tumor suppressor function. Also forms a heterodimer with CSTF1/CSTF-50 to modulate mRNA processing and RNAP II stability by inhibiting pre-mRNA 3' cleavage. This Mus musculus (Mouse) protein is BRCA1-associated RING domain protein 1 (Bard1).